The sequence spans 647 residues: Beta-glucosidase-like SFR2, chloroplastic (647 aa).

The interval Ser116–Gln140 is disordered. Over residues Ser123–Gly132 the composition is skewed to polar residues. An N-linked (GlcNAc...) asparagine glycan is attached at Asn169. Residues His258, Asn302–Glu303, Tyr414, Glu466, Trp504, Glu511–Trp512, and Phe520 each bind a beta-D-glucoside. The active-site Proton donor is Glu303. The active-site Nucleophile is the Glu466.

Belongs to the glycosyl hydrolase 1 family.

It localises to the plastid. It is found in the chloroplast outer membrane. It carries out the reaction 2 a 1,2-diacyl-3-O-(beta-D-galactosyl)-sn-glycerol = a 1,2-diacyl-3-O-[beta-D-galactosyl-(1-&gt;6)-beta-D-galactosyl]-sn-glycerol + a 1,2-diacyl-sn-glycerol. Functionally, galactosyltransferase synthesizing digalactosyldiacylglycerol from monogalactosyldiacylglycerol in the absence of UDP-galactose. Potentially involved in freezing tolerance. This chain is Beta-glucosidase-like SFR2, chloroplastic, found in Oryza sativa subsp. japonica (Rice).